A 170-amino-acid polypeptide reads, in one-letter code: Two-component response regulator ORR6 (170 aa).

Residues 51 to 170 (HVLAVDDSSV…DVSRLCSRIR (120 aa)) form the Response regulatory domain. The residue at position 103 (Asp103) is a 4-aspartylphosphate.

It belongs to the ARR family. Type-A subfamily. In terms of processing, two-component system major event consists of a His-to-Asp phosphorelay between a sensor histidine kinase (HK) and a response regulator (RR). In plants, the His-to-Asp phosphorelay involves an additional intermediate named Histidine-containing phosphotransfer protein (HPt). This multistep phosphorelay consists of a His-Asp-His-Asp sequential transfer of a phosphate group between first a His and an Asp of the HK protein, followed by the transfer to a conserved His of the HPt protein and finally the transfer to an Asp in the receiver domain of the RR protein. As to expression, expressed in roots, leaf blades, leaf sheaths, shoot apex, flowers and panicles.

Functions as a response regulator involved in His-to-Asp phosphorelay signal transduction system. Phosphorylation of the Asp residue in the receiver domain activates the ability of the protein to promote the transcription of target genes. Type-A response regulators seem to act as negative regulators of the cytokinin signaling. The polypeptide is Two-component response regulator ORR6 (Oryza sativa subsp. japonica (Rice)).